A 1357-amino-acid chain; its full sequence is DNA-directed RNA polymerase subunit beta (1357 aa).

Belongs to the RNA polymerase beta chain family. In terms of assembly, the RNAP catalytic core consists of 2 alpha, 1 beta, 1 beta' and 1 omega subunit. When a sigma factor is associated with the core the holoenzyme is formed, which can initiate transcription.

It carries out the reaction RNA(n) + a ribonucleoside 5'-triphosphate = RNA(n+1) + diphosphate. In terms of biological role, DNA-dependent RNA polymerase catalyzes the transcription of DNA into RNA using the four ribonucleoside triphosphates as substrates. In Pseudomonas putida (strain ATCC 700007 / DSM 6899 / JCM 31910 / BCRC 17059 / LMG 24140 / F1), this protein is DNA-directed RNA polymerase subunit beta.